A 186-amino-acid chain; its full sequence is Peptidyl-tRNA hydrolase (186 aa).

Tyr14 contacts tRNA. His19 functions as the Proton acceptor in the catalytic mechanism. TRNA is bound by residues Tyr64, Asn66, and Asn112.

Belongs to the PTH family. Monomer.

It localises to the cytoplasm. The enzyme catalyses an N-acyl-L-alpha-aminoacyl-tRNA + H2O = an N-acyl-L-amino acid + a tRNA + H(+). Hydrolyzes ribosome-free peptidyl-tRNAs (with 1 or more amino acids incorporated), which drop off the ribosome during protein synthesis, or as a result of ribosome stalling. Functionally, catalyzes the release of premature peptidyl moieties from peptidyl-tRNA molecules trapped in stalled 50S ribosomal subunits, and thus maintains levels of free tRNAs and 50S ribosomes. This is Peptidyl-tRNA hydrolase from Bacillus anthracis.